Reading from the N-terminus, the 200-residue chain is Probable UbiX-like flavin prenyltransferase (200 aa).

Residues 9-11, S36, 87-90, and R122 each bind FMN; these read GAT and SMKT.

Belongs to the UbiX/PAD1 family. YclB subfamily. As to quaternary structure, homododecamer.

It carries out the reaction dimethylallyl phosphate + FMNH2 = prenylated FMNH2 + phosphate. Involved in the non-oxidative decarboxylation and detoxification of phenolic derivatives under both aerobic and anaerobic conditions. Flavin prenyltransferase that catalyzes the synthesis of the prenylated FMN cofactor (prenyl-FMN) for phenolic acid decarboxylase. The polypeptide is Probable UbiX-like flavin prenyltransferase (Streptomyces sp. (strain D7)).